The chain runs to 254 residues: UPF0246 protein Fphi_1075 (254 aa).

Belongs to the UPF0246 family.

The chain is UPF0246 protein Fphi_1075 from Francisella philomiragia subsp. philomiragia (strain ATCC 25017 / CCUG 19701 / FSC 153 / O#319-036).